The following is a 184-amino-acid chain: uncharacterized protein (184 aa).

A disordered region spans residues 1–24 (MGISDQINSNLSSQSPFTVSTNPS).

This is an uncharacterized protein from Dictyostelium discoideum (Social amoeba).